The sequence spans 48 residues: uncharacterized protein (48 aa).

This is an uncharacterized protein from Acidianus filamentous virus 2 (isolate Italy/Pozzuoli) (AFV-2).